The primary structure comprises 402 residues: Multidrug resistance protein MdtH (402 aa).

A run of 11 helical transmembrane segments spans residues 13–33, 34–54, 99–116, 139–159, 165–185, 214–234, 243–263, 277–297, 300–320, 340–360, and 368–388; these read YFLLIDNMLVVLGFFVVFPLI, SIRFVDSLGWAALMVGIALGL, PWVLWLSCVLSGLGGTLF, LLMMQDSAGAVTGALIGSWLL, LVCGVGALLFVLCAGFNAWLL, VLTLTGYYMLAVQVMLMLPVM, AAVKWMYAIEAVLSLTLLYPL, LMAGLLVMTFSLVPIGLASNL, LFTLICLFYIGSIIAEPARET, LGLAFGGALGYAGGGWLFDAG, and LPWAMLGVIGVGTFLMLWWQF.

The protein belongs to the major facilitator superfamily. DHA1 family. MdtH (TC 2.A.1.2.21) subfamily.

The protein resides in the cell inner membrane. The protein is Multidrug resistance protein MdtH of Cronobacter sakazakii (strain ATCC BAA-894) (Enterobacter sakazakii).